A 295-amino-acid polypeptide reads, in one-letter code: Pyridoxal 5'-phosphate synthase subunit PdxS (295 aa).

Aspartate 25 contacts D-ribose 5-phosphate. Lysine 82 functions as the Schiff-base intermediate with D-ribose 5-phosphate in the catalytic mechanism. Glycine 154 is a D-ribose 5-phosphate binding site. Residue arginine 166 participates in D-glyceraldehyde 3-phosphate binding. Residues glycine 215 and 236–237 (GS) contribute to the D-ribose 5-phosphate site.

It belongs to the PdxS/SNZ family. In terms of assembly, in the presence of PdxT, forms a dodecamer of heterodimers.

The catalysed reaction is aldehydo-D-ribose 5-phosphate + D-glyceraldehyde 3-phosphate + L-glutamine = pyridoxal 5'-phosphate + L-glutamate + phosphate + 3 H2O + H(+). Its pathway is cofactor biosynthesis; pyridoxal 5'-phosphate biosynthesis. Functionally, catalyzes the formation of pyridoxal 5'-phosphate from ribose 5-phosphate (RBP), glyceraldehyde 3-phosphate (G3P) and ammonia. The ammonia is provided by the PdxT subunit. Can also use ribulose 5-phosphate and dihydroxyacetone phosphate as substrates, resulting from enzyme-catalyzed isomerization of RBP and G3P, respectively. The protein is Pyridoxal 5'-phosphate synthase subunit PdxS of Staphylococcus carnosus (strain TM300).